The primary structure comprises 110 residues: Progonadoliberin-2 (110 aa).

The N-terminal stretch at 1–26 (MASIGQGLVLLLLLLLLTAQPGPLKA) is a signal peptide. The tract at residues 25–85 (KAQHWSHGWY…KALAPPEDTV (61 aa)) is disordered. The residue at position 36 (Gly36) is a Glycine amide.

The protein belongs to the GnRH family. Midbrain.

The protein localises to the secreted. Functionally, stimulates the secretion of gonadotropins; it stimulates the secretion of both luteinizing and follicle-stimulating hormones. This is Progonadoliberin-2 (GNRH2) from Suncus murinus (Asian house shrew).